A 468-amino-acid polypeptide reads, in one-letter code: ATP synthase subunit beta (468 aa).

G155–T162 contributes to the ATP binding site.

It belongs to the ATPase alpha/beta chains family. As to quaternary structure, F-type ATPases have 2 components, CF(1) - the catalytic core - and CF(0) - the membrane proton channel. CF(1) has five subunits: alpha(3), beta(3), gamma(1), delta(1), epsilon(1). CF(0) has three main subunits: a(1), b(2) and c(9-12). The alpha and beta chains form an alternating ring which encloses part of the gamma chain. CF(1) is attached to CF(0) by a central stalk formed by the gamma and epsilon chains, while a peripheral stalk is formed by the delta and b chains.

It is found in the cell membrane. The catalysed reaction is ATP + H2O + 4 H(+)(in) = ADP + phosphate + 5 H(+)(out). Produces ATP from ADP in the presence of a proton gradient across the membrane. The catalytic sites are hosted primarily by the beta subunits. The protein is ATP synthase subunit beta of Streptococcus pneumoniae serotype 19F (strain G54).